Consider the following 375-residue polypeptide: Leucoanthocyanidin dioxygenase 1 (375 aa).

In terms of domain architecture, Fe2OG dioxygenase spans 218 to 317 (LLLQLKINYY…RLSWVVFCEP (100 aa)). Fe cation-binding residues include histidine 242, aspartate 244, and histidine 298. Residue arginine 308 participates in 2-oxoglutarate binding.

It belongs to the iron/ascorbate-dependent oxidoreductase family. Requires L-ascorbate as cofactor. Fe(2+) serves as cofactor.

It carries out the reaction a (2R,3S,4S)-leucoanthocyanidin + 2-oxoglutarate + O2 = a 4-H-anthocyanidin with a 3-hydroxy group + succinate + CO2 + 2 H2O. The protein operates within pigment biosynthesis; anthocyanin biosynthesis. Its function is as follows. Involved in anthocyanin and protoanthocyanidin biosynthesis by catalyzing the oxidation of leucoanthocyanidins into anthocyanidins. Is able to synthesize anthocyanin pigments from leucoanthocyanidins in aleurone tissue. Converts dihydroquercetin to quercetin in vitro. This chain is Leucoanthocyanidin dioxygenase 1, found in Oryza sativa subsp. indica (Rice).